The sequence spans 502 residues: Probable cytochrome P450 313b1 (502 aa).

Position 449 (cysteine 449) interacts with heme.

Belongs to the cytochrome P450 family. Heme is required as a cofactor.

It localises to the endoplasmic reticulum membrane. Its subcellular location is the microsome membrane. Its function is as follows. May be involved in the metabolism of insect hormones and in the breakdown of synthetic insecticides. This Drosophila melanogaster (Fruit fly) protein is Probable cytochrome P450 313b1 (Cyp313b1).